The primary structure comprises 131 residues: Small ribosomal subunit protein bS6 (131 aa).

A disordered region spans residues 100–131 (SPMVKAKDERRERREDFANETSDDADAGDSEE). Basic and acidic residues predominate over residues 104 to 116 (KAKDERRERREDF). The segment covering 120–131 (TSDDADAGDSEE) has biased composition (acidic residues).

Belongs to the bacterial ribosomal protein bS6 family.

Functionally, binds together with bS18 to 16S ribosomal RNA. The polypeptide is Small ribosomal subunit protein bS6 (Erwinia tasmaniensis (strain DSM 17950 / CFBP 7177 / CIP 109463 / NCPPB 4357 / Et1/99)).